The primary structure comprises 460 residues: Bifunctional protein GlmU (460 aa).

Residues 1-232 are pyrophosphorylase; that stretch reads MENVAAIILA…SDEIMGVNDR (232 aa). UDP-N-acetyl-alpha-D-glucosamine-binding positions include 9–12, lysine 23, glutamine 75, and 80–81; these read LAAG and GT. Aspartate 105 is a Mg(2+) binding site. Residues glycine 142, glutamate 157, asparagine 172, and asparagine 230 each coordinate UDP-N-acetyl-alpha-D-glucosamine. Asparagine 230 contacts Mg(2+). The interval 233–253 is linker; that stretch reads AQLAQAARILRRRINRDLMLS. The interval 254–460 is N-acetyltransferase; that stretch reads GVSLVDPEQT…GWRIRMKKKT (207 aa). The UDP-N-acetyl-alpha-D-glucosamine site is built by arginine 336 and lysine 354. Residue histidine 366 is the Proton acceptor of the active site. UDP-N-acetyl-alpha-D-glucosamine is bound by residues tyrosine 369 and asparagine 380. Acetyl-CoA contacts are provided by residues 389–390, serine 408, alanine 426, and arginine 443; that span reads NY.

The protein in the N-terminal section; belongs to the N-acetylglucosamine-1-phosphate uridyltransferase family. This sequence in the C-terminal section; belongs to the transferase hexapeptide repeat family. Homotrimer. Mg(2+) is required as a cofactor.

Its subcellular location is the cytoplasm. It carries out the reaction alpha-D-glucosamine 1-phosphate + acetyl-CoA = N-acetyl-alpha-D-glucosamine 1-phosphate + CoA + H(+). The enzyme catalyses N-acetyl-alpha-D-glucosamine 1-phosphate + UTP + H(+) = UDP-N-acetyl-alpha-D-glucosamine + diphosphate. The protein operates within nucleotide-sugar biosynthesis; UDP-N-acetyl-alpha-D-glucosamine biosynthesis; N-acetyl-alpha-D-glucosamine 1-phosphate from alpha-D-glucosamine 6-phosphate (route II): step 2/2. Its pathway is nucleotide-sugar biosynthesis; UDP-N-acetyl-alpha-D-glucosamine biosynthesis; UDP-N-acetyl-alpha-D-glucosamine from N-acetyl-alpha-D-glucosamine 1-phosphate: step 1/1. It participates in bacterial outer membrane biogenesis; LPS lipid A biosynthesis. In terms of biological role, catalyzes the last two sequential reactions in the de novo biosynthetic pathway for UDP-N-acetylglucosamine (UDP-GlcNAc). The C-terminal domain catalyzes the transfer of acetyl group from acetyl coenzyme A to glucosamine-1-phosphate (GlcN-1-P) to produce N-acetylglucosamine-1-phosphate (GlcNAc-1-P), which is converted into UDP-GlcNAc by the transfer of uridine 5-monophosphate (from uridine 5-triphosphate), a reaction catalyzed by the N-terminal domain. This is Bifunctional protein GlmU from Pelobacter propionicus (strain DSM 2379 / NBRC 103807 / OttBd1).